The chain runs to 64 residues: Large ribosomal subunit protein bL35 (64 aa).

It belongs to the bacterial ribosomal protein bL35 family.

The sequence is that of Large ribosomal subunit protein bL35 from Wolinella succinogenes (strain ATCC 29543 / DSM 1740 / CCUG 13145 / JCM 31913 / LMG 7466 / NCTC 11488 / FDC 602W) (Vibrio succinogenes).